The chain runs to 106 residues: Iron-sulfur cluster assembly protein CyaY (106 aa).

The protein belongs to the frataxin family.

Its function is as follows. Involved in iron-sulfur (Fe-S) cluster assembly. May act as a regulator of Fe-S biogenesis. The protein is Iron-sulfur cluster assembly protein CyaY of Pectobacterium carotovorum subsp. carotovorum (strain PC1).